Consider the following 153-residue polypeptide: Nucleoside diphosphate kinase (153 aa).

K11, F59, R87, T93, R104, and N114 together coordinate ATP. Catalysis depends on H117, which acts as the Pros-phosphohistidine intermediate.

This sequence belongs to the NDK family. As to quaternary structure, homotrimer. Mg(2+) is required as a cofactor.

The enzyme catalyses a 2'-deoxyribonucleoside 5'-diphosphate + ATP = a 2'-deoxyribonucleoside 5'-triphosphate + ADP. The catalysed reaction is a ribonucleoside 5'-diphosphate + ATP = a ribonucleoside 5'-triphosphate + ADP. Its function is as follows. Major role in the synthesis of nucleoside triphosphates other than ATP. The ATP gamma phosphate is transferred to the NDP beta phosphate via a ping-pong mechanism, using a phosphorylated active-site intermediate. This chain is Nucleoside diphosphate kinase (ndk1), found in Aspergillus fumigatus (strain ATCC MYA-4609 / CBS 101355 / FGSC A1100 / Af293) (Neosartorya fumigata).